Reading from the N-terminus, the 453-residue chain is Sodium/alanine symporter AgcS (453 aa).

At 1–17 (MDFVSLVNTVNSFVWGP) the chain is on the extracellular side. A helical membrane pass occupies residues 18 to 32 (YMLVLLLGTGIFLTL). Residues 33 to 67 (RLGFMQIHTLPYALKLAFSKHQDETSEGDISHFQA) are Cytoplasmic-facing. A helical membrane pass occupies residues 68–89 (LMTALAATIGTGNIAGVATAYV). Threonine 75 provides a ligand contact to D-alanine. The L-alanine site is built by threonine 75 and glycine 79. Residue asparagine 80 participates in D-alanine binding. The Extracellular portion of the chain corresponds to 90–92 (LGG). The helical transmembrane segment at 93-111 (PGAIFWMWVTAFFGMATKY) threads the bilayer. At 112-148 (AEAVLAIKYRTVDDNGEMAGGPMYFLEKGLPDHGLGK) the chain is on the cytoplasmic side. A helical transmembrane segment spans residues 149–179 (ILGVAFAFFGAFAAFGIGNMVQTNSVADAVA). Glutamine 170 serves as a coordination point for D-alanine. Glutamine 170 serves as a coordination point for L-alanine. At 180–186 (SNFGVDP) the chain is on the extracellular side. A helical membrane pass occupies residues 187–202 (LITGFVLAIFTAAVIL). Residues 203 to 206 (GGIK) lie on the Cytoplasmic side of the membrane. Residues 207-233 (SIGKATGIIVPFMAVFYILAGLVILAM) traverse the membrane as a helical segment. The Extracellular portion of the chain corresponds to 234–258 (NIGYIIPAFGTIFSSAFNFSAGFGA). Residues 259-274 (LIGTAIMWGVKRGVFS) traverse the membrane as a helical segment. A D-alanine-binding site is contributed by 273–274 (FS). 273–276 (FSNE) is an L-alanine binding site. Residues 275-300 (NEAGLGSAPIAAAAAKTDHPGRQALV) are Cytoplasmic-facing. Residues 301–322 (SMTGTFLDTIVVCTITGLVLTI) form a helical membrane-spanning segment. Over 323–350 (AGLKAFPGLTDLTGASLTAASFDALMPM) the chain is Extracellular. The chain crosses the membrane as a helical span at residues 351–378 (GGLIVTIGLVFFAYSTVLGWSYYGEKCF). The Cytoplasmic portion of the chain corresponds to 379–386 (EYLIGTKG). A helical membrane pass occupies residues 387–403 (IRLYRIAFVLVAFWGAT). The Extracellular portion of the chain corresponds to 404-408 (ASLPL). The helical transmembrane segment at 409 to 430 (VWNIADTLNGAMAIPNLIGLLL) threads the bilayer. Residues 431–453 (LSGVVVSETKAFNEIRKNEAKNA) are Cytoplasmic-facing.

Belongs to the alanine or glycine:cation symporter (AGCS) (TC 2.A.25) family.

It localises to the cell membrane. The catalysed reaction is D-alanine(in) + Na(+)(in) = D-alanine(out) + Na(+)(out). The enzyme catalyses L-alanine(in) + Na(+)(in) = L-alanine(out) + Na(+)(out). It catalyses the reaction glycine(in) + Na(+)(in) = glycine(out) + Na(+)(out). Functionally, catalyzes the sodium-dependent uptake of extracellular D-alanine and L-alanine. Can also transport glycine. Binds glycine and both enantiomers of alanine, while strictly excluding other amino acids. The sequence is that of Sodium/alanine symporter AgcS from Methanococcus maripaludis (strain DSM 14266 / JCM 13030 / NBRC 101832 / S2 / LL).